The following is a 391-amino-acid chain: Succinate--CoA ligase [ADP-forming] subunit beta (391 aa).

The 238-residue stretch at 9-246 (KHLFTEAGIA…LTQEDETEVR (238 aa)) folds into the ATP-grasp domain. Residues K46, 53–55 (GRG), E99, L102, and E107 each bind ATP. Positions 199 and 213 each coordinate Mg(2+). Substrate contacts are provided by residues N266 and 323–325 (GIV).

Belongs to the succinate/malate CoA ligase beta subunit family. Heterotetramer of two alpha and two beta subunits. The cofactor is Mg(2+).

The enzyme catalyses succinate + ATP + CoA = succinyl-CoA + ADP + phosphate. It catalyses the reaction GTP + succinate + CoA = succinyl-CoA + GDP + phosphate. It functions in the pathway carbohydrate metabolism; tricarboxylic acid cycle; succinate from succinyl-CoA (ligase route): step 1/1. Functionally, succinyl-CoA synthetase functions in the citric acid cycle (TCA), coupling the hydrolysis of succinyl-CoA to the synthesis of either ATP or GTP and thus represents the only step of substrate-level phosphorylation in the TCA. The beta subunit provides nucleotide specificity of the enzyme and binds the substrate succinate, while the binding sites for coenzyme A and phosphate are found in the alpha subunit. This chain is Succinate--CoA ligase [ADP-forming] subunit beta, found in Halorhodospira halophila (strain DSM 244 / SL1) (Ectothiorhodospira halophila (strain DSM 244 / SL1)).